The chain runs to 168 residues: NADH-quinone oxidoreductase subunit I (168 aa).

2 consecutive 4Fe-4S ferredoxin-type domains span residues 58–88 and 99–128; these read LRTY…IEAQ and VRYD…EGPN. 8 residues coordinate [4Fe-4S] cluster: C68, C71, C74, C78, C108, C111, C114, and C118.

Belongs to the complex I 23 kDa subunit family. NDH-1 is composed of 14 different subunits. Subunits NuoA, H, J, K, L, M, N constitute the membrane sector of the complex. [4Fe-4S] cluster serves as cofactor.

The protein localises to the cell inner membrane. The enzyme catalyses a quinone + NADH + 5 H(+)(in) = a quinol + NAD(+) + 4 H(+)(out). Functionally, NDH-1 shuttles electrons from NADH, via FMN and iron-sulfur (Fe-S) centers, to quinones in the respiratory chain. The immediate electron acceptor for the enzyme in this species is believed to be ubiquinone. Couples the redox reaction to proton translocation (for every two electrons transferred, four hydrogen ions are translocated across the cytoplasmic membrane), and thus conserves the redox energy in a proton gradient. This is NADH-quinone oxidoreductase subunit I from Ehrlichia ruminantium (strain Gardel).